The sequence spans 159 residues: MSIIPSFFGSRRSNVLNPFSLDIWDPFQDYPLITSSGTSSEFGKETAAFANTHIDWKETPQAHVFKADLPGLKKEEVKVEVEEGKVLQISGERNKEKEEKNNKWHRVEFSSGKFLRRFRLPENANVDEVKAGMENGVLTVTVPKVEMKKPEVKSIHISG.

In terms of domain architecture, sHSP spans 45-159; the sequence is ETAAFANTHI…PEVKSIHISG (115 aa).

Belongs to the small heat shock protein (HSP20) family. Forms oligomeric structures.

It is found in the cytoplasm. The sequence is that of 18.0 kDa class I heat shock protein from Daucus carota (Wild carrot).